The following is a 289-amino-acid chain: MVSQFAIEVRNLTYKFKESSDPSVVDINLQIPWNTRSLVVGANGAGKSTLLKLLSGKHLCLDGKILVNGLDPFSPLSMNQVDDDESVEDSTNYQTTTYLGTEWCHMSIINRDIGVLELLKSIGFDHFRERGERLVRILDIDVRWRMHRLSDGQKRRVQLAMGLLKPWRVLLLDEVTVDLDVIARARLLEFLKWETETRRCSVVYATHIFDGLAKWPNQVYHMKSGKIVDNLDYQKDVEFSEVVNAKVNGQVAFENDNNKVVISKVNSLHPLALEWLKRDNQIPDKEIGI.

Positions 7–249 (IEVRNLTYKF…SEVVNAKVNG (243 aa)) constitute an ABC transporter domain. 41 to 48 (GANGAGKS) lines the ATP pocket.

This sequence belongs to the ABC transporter superfamily. Interacts with CCR4 and SSN2.

It localises to the cytoplasm. Its subcellular location is the nucleus. This Saccharomyces cerevisiae (strain ATCC 204508 / S288c) (Baker's yeast) protein is CCR4-associated factor 16 (CAF16).